Consider the following 256-residue polypeptide: Glutamate racemase (256 aa).

Substrate is bound by residues 11 to 12 (DS) and 43 to 44 (YG). Residue Cys74 is the Proton donor/acceptor of the active site. 75–76 (NT) lines the substrate pocket. The active-site Proton donor/acceptor is the Cys182. Substrate is bound at residue 183–184 (TH).

The protein belongs to the aspartate/glutamate racemases family.

The enzyme catalyses L-glutamate = D-glutamate. It participates in cell wall biogenesis; peptidoglycan biosynthesis. In terms of biological role, provides the (R)-glutamate required for cell wall biosynthesis. This chain is Glutamate racemase, found in Leptospira interrogans serogroup Icterohaemorrhagiae serovar copenhageni (strain Fiocruz L1-130).